Reading from the N-terminus, the 718-residue chain is MRAVLDTADIAIVALYFILVMCIGFFAMWKSNRSTVSGYFLAGRSMTWVAIGASLFVSNIGSEHFIGLAGSGAASGFAVGAWEFNALLLLQLLGWVFIPIYIRSGVYTMPEYLSKRFGGHRIQVYFAALSLILYIFTKLSVDLYSGALFIQESLGWNLYVSVILLIGMTALLTVTGGLVAVIYTDTLQALLMIIGALTLMIISIMEIGGFEEVKRRYMLASPDVTSILLTYNLSNTNSCNVSPKKEALKMLRNPTDEDVPWPGFILGQTPASVWYWCADQVIVQRVLAAKNIAHAKGSTLMAGFLKLLPMFIIVVPGMISRILFTDDIACINPEHCMLVCGSRAGCSNIAYPRLVMKLVPVGLRGLMMAVMIAALMSDLDSIFNSASTIFTLDVYKLIRKSASSRELMIVGRIFVAFMVVISIAWVPIIVEMQGGQMYLYIQEVADYLTPPVAALFLLAIFWKRCNEQGAFYGGMAGFVLGAVRLILAFAYRAPECDQPDNRPGFIKDIHYMYVATGLFWVTGLITVIVSLLTPPPTKEQIRTTTFWSKKNLVVKENCSPKEEPYKMQEKSILRCSENNETINHIIPNGKSEDSIKGLQPEDVNLLVTCREEGNPVASLGHSEAETPVDAYSNGQAALMGEKERKKETDDGGRYWKFIDWFCGFKSKSLSKRSLRDLMEEEAVCLQMLEETRQVKVILNIGLFAVCSLGIFMFVYFSL.

At 1 to 9 the chain is on the extracellular side; it reads MRAVLDTAD. A helical transmembrane segment spans residues 10–29; the sequence is IAIVALYFILVMCIGFFAMW. At 30-38 the chain is on the cytoplasmic side; that stretch reads KSNRSTVSG. A helical membrane pass occupies residues 39–57; the sequence is YFLAGRSMTWVAIGASLFV. Residues 58–86 lie on the Extracellular side of the membrane; the sequence is SNIGSEHFIGLAGSGAASGFAVGAWEFNA. Residues 87 to 110 traverse the membrane as a helical segment; the sequence is LLLLQLLGWVFIPIYIRSGVYTMP. The Cytoplasmic portion of the chain corresponds to 111 to 123; it reads EYLSKRFGGHRIQ. The helical transmembrane segment at 124–144 threads the bilayer; that stretch reads VYFAALSLILYIFTKLSVDLY. Residues 145–157 are Extracellular-facing; that stretch reads SGALFIQESLGWN. Residues 158–183 traverse the membrane as a helical segment; it reads LYVSVILLIGMTALLTVTGGLVAVIY. At 184 to 186 the chain is on the cytoplasmic side; sequence TDT. The chain crosses the membrane as a helical span at residues 187-205; that stretch reads LQALLMIIGALTLMIISIM. The Extracellular portion of the chain corresponds to 206–303; that stretch reads EIGGFEEVKR…HAKGSTLMAG (98 aa). Asn232 carries N-linked (GlcNAc...) asparagine glycosylation. A helical transmembrane segment spans residues 304-324; it reads FLKLLPMFIIVVPGMISRILF. Residues 325 to 353 lie on the Cytoplasmic side of the membrane; the sequence is TDDIACINPEHCMLVCGSRAGCSNIAYPR. A helical transmembrane segment spans residues 354-376; the sequence is LVMKLVPVGLRGLMMAVMIAALM. Residues 377–406 are Extracellular-facing; sequence SDLDSIFNSASTIFTLDVYKLIRKSASSRE. A helical transmembrane segment spans residues 407–430; sequence LMIVGRIFVAFMVVISIAWVPIIV. Over 431–443 the chain is Cytoplasmic; that stretch reads EMQGGQMYLYIQE. The helical transmembrane segment at 444–462 threads the bilayer; that stretch reads VADYLTPPVAALFLLAIFW. Topologically, residues 463-510 are extracellular; sequence KRCNEQGAFYGGMAGFVLGAVRLILAFAYRAPECDQPDNRPGFIKDIH. A helical transmembrane segment spans residues 511–532; sequence YMYVATGLFWVTGLITVIVSLL. At 533 to 695 the chain is on the cytoplasmic side; sequence TPPPTKEQIR…QMLEETRQVK (163 aa). Residues Ser594 and Ser632 each carry the phosphoserine modification. A helical membrane pass occupies residues 696–716; it reads VILNIGLFAVCSLGIFMFVYF. Over 717 to 718 the chain is Extracellular; the sequence is SL.

It belongs to the sodium:solute symporter (SSF) (TC 2.A.21) family. Interacts with KCNQ2 (via the pore module). Interacts with KCNQ1; this interaction is direct. Forms coregulatory complexes with ion channels KCNQ2-KCNQ3 and KCNQ1-KCNE2.

It localises to the apical cell membrane. It is found in the basolateral cell membrane. The enzyme catalyses myo-inositol(out) + 2 Na(+)(out) = myo-inositol(in) + 2 Na(+)(in). It catalyses the reaction scyllo-inositol(out) + 2 Na(+)(out) = scyllo-inositol(in) + 2 Na(+)(in). Functionally, electrogenic Na(+)-coupled sugar symporter that actively transports myo-inositol and its stereoisomer scyllo-inositol across the plasma membrane, with a Na(+) to sugar coupling ratio of 2:1. Maintains myo-inositol concentration gradient that defines cell volume and fluid balance during osmotic stress, in particular in the fetoplacental unit and central nervous system. Forms coregulatory complexes with voltage-gated K(+) ion channels, allosterically altering ion selectivity, voltage dependence and gating kinetics of the channel. In turn, K(+) efflux through the channel forms a local electrical gradient that modulates electrogenic Na(+)-coupled myo-inositol influx through the transporter. Associates with KCNQ1-KCNE2 channel in the apical membrane of choroid plexus epithelium and regulates the myo-inositol gradient between blood and cerebrospinal fluid with an impact on neuron excitability. Associates with KCNQ2-KCNQ3 channel altering ion selectivity, increasing Na(+) and Cs(+) permeation relative to K(+) permeation. Provides myo-inositol precursor for biosynthesis of phosphoinositides such as PI(4,5)P2, thus indirectly affecting the activity of phosphoinositide-dependent ion channels and Ca(2+) signaling upon osmotic stress. This Homo sapiens (Human) protein is Sodium/myo-inositol cotransporter.